A 410-amino-acid polypeptide reads, in one-letter code: Interstrand DNA cross-link repair glycosylase (410 aa).

Residues 45 to 47 carry the QXD; important for activity motif; the sequence is QID.

The protein belongs to the DNA glycosylase AlkZ-like family.

Functionally, DNA glycosylase involved in the repair of interstrand DNA cross-links (ICLs), which are highly toxic DNA lesions that covalently tether the opposing strands of DNA, thereby inhibiting essential cellular processes such as DNA replication and transcription. Acts by unhooking both sides of the ICLs, forming abasic (AP) sites on both strands. Unhooks ICLs derived from various cross-linking agents, including azinomycin B (AZB) and mechlorethamine, also known as nitrogen mustard (NM), protecting cells from the toxicity of these cross-linking agents. In vitro, also acts on monoadducts and can catalyze the excision of N7-methylguanine (7mGua) from an oligonucleotide containing N7-methyldeoxyguanosine (d7mG). Shows no unhooking activity toward FaPy-ICLs. The sequence is that of Interstrand DNA cross-link repair glycosylase (ycaQ) from Escherichia coli (strain K12).